The primary structure comprises 1128 residues: GTPase-activating protein BEM3 (1128 aa).

Positions 194-241 (SSPTKIHSEQLASPAASVTYTTSRITIKSPNKGSKSPLQERLRSPQNP) are disordered. The segment covering 209–230 (ASVTYTTSRITIKSPNKGSKSP) has biased composition (polar residues). Position 254 is a phosphoserine (Ser-254). Disordered regions lie at residues 345-391 (EDLV…TPLS) and 418-486 (PVLT…RPHA). Residues 366–375 (LPPPPAPPTF) are compositionally biased toward pro residues. 2 stretches are compositionally biased toward polar residues: residues 382 to 391 (GNIKNSTPLS) and 420 to 478 (LTSS…QGSL). A PH domain is found at 634-741 (DNVKDGSLLL…WLSAFSDYID (108 aa)). Disordered regions lie at residues 746-777 (LSLSSSRNANDTDSASHLSAGTHHSKFGNATI) and 796-838 (NNNI…DSRR). Positions 752–764 (RNANDTDSASHLS) are enriched in polar residues. Over residues 796–815 (NNNISNSSNNIANSDGIDSN) the composition is skewed to low complexity. A compositionally biased stretch (polar residues) spans 816-829 (PSSHSNFLASSSGN). Residues 913–1128 (LRLSSHKYQN…EKVDIHIPQV (216 aa)) enclose the Rho-GAP domain.

It is found in the cytoplasm. GTPase-activating protein (GAP) for CDC42 and less efficiently for RHO1. Negative regulator of the pheromone-response pathway through the STE20 protein kinase. The polypeptide is GTPase-activating protein BEM3 (BEM3) (Saccharomyces cerevisiae (strain ATCC 204508 / S288c) (Baker's yeast)).